The primary structure comprises 281 residues: MINEYLKLMKPHVIWLLVLSALVGYIAAAGPLVNPIKLIELTVVGFLSTGGSAAFNMYYERDIDSLMVRTMKRPIPSGKVTPLNALTFSIAVSLSGFTLSYLWLGSWVTLMIALGWFFYAVLYTIMLKRRTWLNIVIGGFAGNAALLSGWIMAKPIDLESILLSMVIYVWIPAHIWSLAYYARDDYKRVNVPMLPTMVNEKASVRIISILNLVSIIYMLVLYQLYMAKLIGYILVIPATLAGIIVTIKALIKPSNESFRTMFKATSPILLLFLLAVIISRI.

9 helical membrane passes run 13-33, 38-58, 85-105, 107-127, 132-152, 161-181, 206-226, 227-247, and 261-281; these read VIWL…GPLV, LIEL…FNMY, ALTF…LWLG, WVTL…TIML, WLNI…GWIM, ILLS…LAYY, IISI…QLYM, AKLI…IVTI, and MFKA…ISRI.

The protein belongs to the UbiA prenyltransferase family. Protoheme IX farnesyltransferase subfamily.

The protein localises to the cell membrane. The enzyme catalyses heme b + (2E,6E)-farnesyl diphosphate + H2O = Fe(II)-heme o + diphosphate. It participates in porphyrin-containing compound metabolism; heme O biosynthesis; heme O from protoheme: step 1/1. Its function is as follows. Converts heme B (protoheme IX) to heme O by substitution of the vinyl group on carbon 2 of heme B porphyrin ring with a hydroxyethyl farnesyl side group. In Caldivirga maquilingensis (strain ATCC 700844 / DSM 13496 / JCM 10307 / IC-167), this protein is Protoheme IX farnesyltransferase.